The sequence spans 363 residues: GDSL esterase/lipase At3g14220 (363 aa).

Positions 1-28 (MAKNRNLVFFLGVLASFTLSSFPVTVSG) are cleaved as a signal peptide. Serine 39 functions as the Nucleophile in the catalytic mechanism. Residues aspartate 318 and histidine 321 contribute to the active site.

Belongs to the 'GDSL' lipolytic enzyme family.

The protein resides in the secreted. The protein is GDSL esterase/lipase At3g14220 of Arabidopsis thaliana (Mouse-ear cress).